Here is a 369-residue protein sequence, read N- to C-terminus: RNA pseudouridine synthase 5 (369 aa).

Positions 47-104 (APLLGWIQRIQNGQIQIDGEVVKDPNTLLRSGSKLVYSRLPWKEPDTPYSLEVLYEDD) constitute an S4 RNA-binding domain.

It belongs to the pseudouridine synthase RluA family.

It catalyses the reaction a uridine in RNA = a pseudouridine in RNA. The chain is RNA pseudouridine synthase 5 from Arabidopsis thaliana (Mouse-ear cress).